The chain runs to 228 residues: Sec-independent protein translocase protein TatB (228 aa).

A helical transmembrane segment spans residues 1-21 (MFDFGLGELVFVGIIALIVLG). 2 disordered regions span residues 126–162 (LSDG…AETD) and 196–228 (VPHT…VRKS). Basic residues predominate over residues 206–228 (AISRKRGLRPKHRAKPKLRVRKS).

It belongs to the TatB family. As to quaternary structure, the Tat system comprises two distinct complexes: a TatABC complex, containing multiple copies of TatA, TatB and TatC subunits, and a separate TatA complex, containing only TatA subunits. Substrates initially bind to the TatABC complex, which probably triggers association of the separate TatA complex to form the active translocon.

Its subcellular location is the cell inner membrane. In terms of biological role, part of the twin-arginine translocation (Tat) system that transports large folded proteins containing a characteristic twin-arginine motif in their signal peptide across membranes. Together with TatC, TatB is part of a receptor directly interacting with Tat signal peptides. TatB may form an oligomeric binding site that transiently accommodates folded Tat precursor proteins before their translocation. The polypeptide is Sec-independent protein translocase protein TatB (Neisseria meningitidis serogroup C / serotype 2a (strain ATCC 700532 / DSM 15464 / FAM18)).